The primary structure comprises 128 residues: Sulfurtransferase TusD (128 aa).

Residue C78 is the Cysteine persulfide intermediate of the active site.

The protein belongs to the DsrE/TusD family. As to quaternary structure, heterohexamer, formed by a dimer of trimers. The hexameric TusBCD complex contains 2 copies each of TusB, TusC and TusD. The TusBCD complex interacts with TusE.

It localises to the cytoplasm. Part of a sulfur-relay system required for 2-thiolation of 5-methylaminomethyl-2-thiouridine (mnm(5)s(2)U) at tRNA wobble positions. Accepts sulfur from TusA and transfers it in turn to TusE. The protein is Sulfurtransferase TusD of Escherichia coli O7:K1 (strain IAI39 / ExPEC).